The primary structure comprises 319 residues: 4-hydroxy-3-methylbut-2-enyl diphosphate reductase (319 aa).

[4Fe-4S] cluster is bound at residue Cys-15. Residues His-44 and His-77 each contribute to the (2E)-4-hydroxy-3-methylbut-2-enyl diphosphate site. Dimethylallyl diphosphate contacts are provided by His-44 and His-77. Isopentenyl diphosphate-binding residues include His-44 and His-77. Position 99 (Cys-99) interacts with [4Fe-4S] cluster. (2E)-4-hydroxy-3-methylbut-2-enyl diphosphate is bound at residue His-127. A dimethylallyl diphosphate-binding site is contributed by His-127. His-127 lines the isopentenyl diphosphate pocket. Glu-129 (proton donor) is an active-site residue. Thr-167 serves as a coordination point for (2E)-4-hydroxy-3-methylbut-2-enyl diphosphate. Cys-197 serves as a coordination point for [4Fe-4S] cluster. Ser-225, Ser-226, Asn-227, and Ser-269 together coordinate (2E)-4-hydroxy-3-methylbut-2-enyl diphosphate. Ser-225, Ser-226, Asn-227, and Ser-269 together coordinate dimethylallyl diphosphate. Residues Ser-225, Ser-226, Asn-227, and Ser-269 each coordinate isopentenyl diphosphate.

It belongs to the IspH family. It depends on [4Fe-4S] cluster as a cofactor.

It catalyses the reaction isopentenyl diphosphate + 2 oxidized [2Fe-2S]-[ferredoxin] + H2O = (2E)-4-hydroxy-3-methylbut-2-enyl diphosphate + 2 reduced [2Fe-2S]-[ferredoxin] + 2 H(+). The catalysed reaction is dimethylallyl diphosphate + 2 oxidized [2Fe-2S]-[ferredoxin] + H2O = (2E)-4-hydroxy-3-methylbut-2-enyl diphosphate + 2 reduced [2Fe-2S]-[ferredoxin] + 2 H(+). It participates in isoprenoid biosynthesis; dimethylallyl diphosphate biosynthesis; dimethylallyl diphosphate from (2E)-4-hydroxy-3-methylbutenyl diphosphate: step 1/1. The protein operates within isoprenoid biosynthesis; isopentenyl diphosphate biosynthesis via DXP pathway; isopentenyl diphosphate from 1-deoxy-D-xylulose 5-phosphate: step 6/6. Its function is as follows. Catalyzes the conversion of 1-hydroxy-2-methyl-2-(E)-butenyl 4-diphosphate (HMBPP) into a mixture of isopentenyl diphosphate (IPP) and dimethylallyl diphosphate (DMAPP). Acts in the terminal step of the DOXP/MEP pathway for isoprenoid precursor biosynthesis. The polypeptide is 4-hydroxy-3-methylbut-2-enyl diphosphate reductase (Rhodopirellula baltica (strain DSM 10527 / NCIMB 13988 / SH1)).